We begin with the raw amino-acid sequence, 328 residues long: P2Y purinoceptor 6 (328 aa).

Residues 1–27 lie on the Extracellular side of the membrane; it reads MERDNGTIQAPGLPPTTCVYREDFKRL. The N-linked (GlcNAc...) asparagine glycan is linked to Asn-5. The chain crosses the membrane as a helical span at residues 28-48; that stretch reads LLPPVYSVVLVVGLPLNVCVI. At 49–62 the chain is on the cytoplasmic side; sequence AQICASRRTLTRSA. Residues 63–83 traverse the membrane as a helical segment; the sequence is VYTLNLALADLLYACSLPLLI. Residues 84–101 are Extracellular-facing; it reads YNYARGDHWPFGDLACRL. An intrachain disulfide couples Cys-99 to Cys-177. Residues 102–122 form a helical membrane-spanning segment; it reads VRFLFYANLHGSILFLTCISF. At 123–144 the chain is on the cytoplasmic side; the sequence is QRYLGICHPLAPWHKRGGRRAA. Residues 145 to 165 traverse the membrane as a helical segment; that stretch reads WVVCGVVWLVVTAQCLPTAVF. Residues 166 to 194 lie on the Extracellular side of the membrane; the sequence is AATGIQRNRTVCYDLSPPILSTRYLPYGM. N-linked (GlcNAc...) asparagine glycosylation is present at Asn-173. Residues 195 to 215 form a helical membrane-spanning segment; that stretch reads ALTVIGFLLPFTALLACYCRM. The Cytoplasmic portion of the chain corresponds to 216-236; it reads ARRLCRQDGPAGPVAQERRSK. The helical transmembrane segment at 237-257 threads the bilayer; it reads AARMAVVVAAVFVISFLPFHI. Residues 258 to 280 are Extracellular-facing; that stretch reads TKTAYLAVRSTPGVSCPVLETFA. Residues 281–303 form a helical membrane-spanning segment; the sequence is AAYKGTRPFASANSVLDPILFYF. Residues 304–328 lie on the Cytoplasmic side of the membrane; the sequence is TQQKFRRQPHDLLQKLTAKWQRQRV.

It belongs to the G-protein coupled receptor 1 family. Abundantly expressed in various tissues including lung, stomach, intestine, spleen, mesentery, heart, and, most prominently, aorta.

It is found in the cell membrane. In terms of biological role, receptor for extracellular UTP &gt; ADP = 2-methylthio-ATP &gt; ADP-beta-S &gt; ATP = ATP-gamma-S. The activity of this receptor is mediated by G proteins which activate a phosphatidylinositol-calcium second messenger system. Functionally coupled to phospholipase C. In Rattus norvegicus (Rat), this protein is P2Y purinoceptor 6 (P2ry6).